The primary structure comprises 148 residues: Large ribosomal subunit protein bL9 (148 aa).

The tract at residues 46 to 65 is disordered; that stretch reads QLQQQNKHAEQEREQEIEDA. The segment covering 52–65 has biased composition (basic and acidic residues); it reads KHAEQEREQEIEDA.

This sequence belongs to the bacterial ribosomal protein bL9 family.

Its function is as follows. Binds to the 23S rRNA. The chain is Large ribosomal subunit protein bL9 from Staphylococcus carnosus (strain TM300).